A 924-amino-acid chain; its full sequence is Lipoxygenase 7, chloroplastic (924 aa).

The transit peptide at 1 to 61 (MLRPQLNPSS…GQGSSRVVVV (61 aa)) directs the protein to the chloroplast. Residues 88-218 (AVATIKVTVG…VGDEGTPSKR (131 aa)) form the PLAT domain. In terms of domain architecture, Lipoxygenase spans 225-924 (TYLPGQTPAG…GMGIPNSTSI (700 aa)). A disordered region spans residues 231 to 315 (TPAGLRSYRK…PKSETRKGNV (85 aa)). Composition is skewed to basic and acidic residues over residues 239 to 262 (RKND…RVYD) and 302 to 315 (SKKD…KGNV). Positions 581, 586, 773, 777, and 924 each coordinate Fe cation.

This sequence belongs to the lipoxygenase family. The cofactor is Fe cation.

The protein resides in the plastid. The protein localises to the chloroplast. It carries out the reaction (9Z,12Z)-octadecadienoate + O2 = (13S)-hydroperoxy-(9Z,11E)-octadecadienoate. The catalysed reaction is (9Z,12Z,15Z)-octadecatrienoate + O2 = (13S)-hydroperoxy-(9Z,11E,15Z)-octadecatrienoate. It functions in the pathway lipid metabolism; oxylipin biosynthesis. In terms of biological role, plant lipoxygenase may be involved in a number of diverse aspects of plant physiology including growth and development, pest resistance, and senescence or responses to wounding. This lipoxygenase introduces molecular oxygen exclusively into the C-13 position of linoleic and linolenic acids. The protein is Lipoxygenase 7, chloroplastic (CM-LOX1) of Oryza sativa subsp. japonica (Rice).